Consider the following 283-residue polypeptide: 4-diphosphocytidyl-2-C-methyl-D-erythritol kinase (283 aa).

Lys-10 is an active-site residue. An ATP-binding site is contributed by 99–109 (PMGGGLGGGSS). Asp-141 is a catalytic residue.

It belongs to the GHMP kinase family. IspE subfamily. As to quaternary structure, homodimer.

It carries out the reaction 4-CDP-2-C-methyl-D-erythritol + ATP = 4-CDP-2-C-methyl-D-erythritol 2-phosphate + ADP + H(+). Its pathway is isoprenoid biosynthesis; isopentenyl diphosphate biosynthesis via DXP pathway; isopentenyl diphosphate from 1-deoxy-D-xylulose 5-phosphate: step 3/6. Functionally, catalyzes the phosphorylation of the position 2 hydroxy group of 4-diphosphocytidyl-2C-methyl-D-erythritol. In Citrobacter koseri (strain ATCC BAA-895 / CDC 4225-83 / SGSC4696), this protein is 4-diphosphocytidyl-2-C-methyl-D-erythritol kinase.